We begin with the raw amino-acid sequence, 179 residues long: MTLKNRYKESIRPKLLKDLGLKNIHQVPKVVKVNVNRGLGEAASNSKSLEASLNEMATITGQKALVTRAKKAIAGFKIREGMPIGCTVTLRGDRMYSFLERFINLALPRIRDFRGVNPKSFDGRGNYTVGVKEQLIFPEISFDKIDSIRGMDITIVTSARSDQEGKALLQELGMPFSKN.

The protein belongs to the universal ribosomal protein uL5 family. In terms of assembly, part of the 50S ribosomal subunit; part of the 5S rRNA/L5/L18/L25 subcomplex. Contacts the 5S rRNA and the P site tRNA. Forms a bridge to the 30S subunit in the 70S ribosome.

Its function is as follows. This is one of the proteins that bind and probably mediate the attachment of the 5S RNA into the large ribosomal subunit, where it forms part of the central protuberance. In the 70S ribosome it contacts protein S13 of the 30S subunit (bridge B1b), connecting the 2 subunits; this bridge is implicated in subunit movement. Contacts the P site tRNA; the 5S rRNA and some of its associated proteins might help stabilize positioning of ribosome-bound tRNAs. In Prochlorococcus marinus (strain MIT 9312), this protein is Large ribosomal subunit protein uL5.